The following is a 311-amino-acid chain: Serine hydrolase-like protein (311 aa).

Residues 27 to 227 (PPVLCLHGWL…FVSKEMFVHS (201 aa)) form the AB hydrolase-1 domain. Ser-102 is an active-site residue. The residue at position 210 (Ser-210) is a Phosphoserine.

The protein belongs to the AB hydrolase superfamily. Ubiquitous. High protein expression in skeletal and cardiac muscle.

Its subcellular location is the cytoplasm. The protein resides in the perinuclear region. It localises to the peroxisome. Probable serine hydrolase. May be related to cell muscle hypertrophy. In Mus musculus (Mouse), this protein is Serine hydrolase-like protein (Serhl).